Here is a 431-residue protein sequence, read N- to C-terminus: MATASLDTARPERRAGSDPFIEKTPEVRPEAMVATGRPSLVGLTRGALRERLAAIGVPEREQRMRTGQLWHWINVRGAASFEAMTNVGKGLKAQLEEAYTLDRPEVVSEQVSRDGTRKWLLRMPPTGRHDHNRGAEIECVYIPANDRGTLCVSSQVGCTLTCSFCHTGTQRLVRNLSAQEITAQLVVARDRLGDWPGQVPPKGTFVPVDGSRFVSNIVFMGMGEPLYNVDNVVDAVGVMSDNEGLGLSRRRITVSTSGVVPQFERLGIDANAMLAISLHAVRDDLRDELVPLNRKYPIRTLLEACRNYPGVSNARRITFEYVMLKGVNDSDSEARELVRLLKGIPAKINLIPFNPWPGSRYECSDWERIERFSEIVFNAGYASPVRTPRGRDILAACGQLKSETEKLRARARLMLEDGIGAEGVYGAVDDD.

The interval 1–26 (MATASLDTARPERRAGSDPFIEKTPE) is disordered. Residues 9 to 26 (ARPERRAGSDPFIEKTPE) are compositionally biased toward basic and acidic residues. The Proton acceptor role is filled by Glu-138. One can recognise a Radical SAM core domain in the interval 144 to 394 (ANDRGTLCVS…VRTPRGRDIL (251 aa)). Cysteines 151 and 397 form a disulfide. 3 residues coordinate [4Fe-4S] cluster: Cys-158, Cys-162, and Cys-165. Residues 223-224 (GE), Ser-255, 277-279 (SLH), and Asn-354 contribute to the S-adenosyl-L-methionine site. Cys-397 acts as the S-methylcysteine intermediate in catalysis.

It belongs to the radical SAM superfamily. RlmN family. It depends on [4Fe-4S] cluster as a cofactor.

It is found in the cytoplasm. It catalyses the reaction adenosine(2503) in 23S rRNA + 2 reduced [2Fe-2S]-[ferredoxin] + 2 S-adenosyl-L-methionine = 2-methyladenosine(2503) in 23S rRNA + 5'-deoxyadenosine + L-methionine + 2 oxidized [2Fe-2S]-[ferredoxin] + S-adenosyl-L-homocysteine. It carries out the reaction adenosine(37) in tRNA + 2 reduced [2Fe-2S]-[ferredoxin] + 2 S-adenosyl-L-methionine = 2-methyladenosine(37) in tRNA + 5'-deoxyadenosine + L-methionine + 2 oxidized [2Fe-2S]-[ferredoxin] + S-adenosyl-L-homocysteine. Specifically methylates position 2 of adenine 2503 in 23S rRNA and position 2 of adenine 37 in tRNAs. m2A2503 modification seems to play a crucial role in the proofreading step occurring at the peptidyl transferase center and thus would serve to optimize ribosomal fidelity. The chain is Dual-specificity RNA methyltransferase RlmN from Methylobacterium sp. (strain 4-46).